Consider the following 189-residue polypeptide: UPF0232 protein MLBr00004 (189 aa).

A disordered region spans residues 59–78 (TDRRRNWSGPGPDVRDPQPL).

This sequence belongs to the UPF0232 family.

The sequence is that of UPF0232 protein MLBr00004 from Mycobacterium leprae (strain Br4923).